The chain runs to 489 residues: Glutamyl-tRNA(Gln) amidotransferase subunit A (489 aa).

Residues Lys80 and Ser160 each act as charge relay system in the active site. Ser184 functions as the Acyl-ester intermediate in the catalytic mechanism.

The protein belongs to the amidase family. GatA subfamily. In terms of assembly, heterotrimer of A, B and C subunits.

It catalyses the reaction L-glutamyl-tRNA(Gln) + L-glutamine + ATP + H2O = L-glutaminyl-tRNA(Gln) + L-glutamate + ADP + phosphate + H(+). Functionally, allows the formation of correctly charged Gln-tRNA(Gln) through the transamidation of misacylated Glu-tRNA(Gln) in organisms which lack glutaminyl-tRNA synthetase. The reaction takes place in the presence of glutamine and ATP through an activated gamma-phospho-Glu-tRNA(Gln). The polypeptide is Glutamyl-tRNA(Gln) amidotransferase subunit A (Wolbachia sp. subsp. Brugia malayi (strain TRS)).